Here is a 388-residue protein sequence, read N- to C-terminus: Dual-specificity RNA methyltransferase RlmN (388 aa).

Glu109 serves as the catalytic Proton acceptor. One can recognise a Radical SAM core domain in the interval 115–354 (EDDRATLCVS…TIVRKTRGDD (240 aa)). An intrachain disulfide couples Cys122 to Cys359. The [4Fe-4S] cluster site is built by Cys129, Cys133, and Cys136. S-adenosyl-L-methionine is bound by residues 183-184 (GE), Ser215, 237-239 (SLH), and Asn316. Cys359 serves as the catalytic S-methylcysteine intermediate.

Belongs to the radical SAM superfamily. RlmN family. The cofactor is [4Fe-4S] cluster.

The protein localises to the cytoplasm. It catalyses the reaction adenosine(2503) in 23S rRNA + 2 reduced [2Fe-2S]-[ferredoxin] + 2 S-adenosyl-L-methionine = 2-methyladenosine(2503) in 23S rRNA + 5'-deoxyadenosine + L-methionine + 2 oxidized [2Fe-2S]-[ferredoxin] + S-adenosyl-L-homocysteine. The catalysed reaction is adenosine(37) in tRNA + 2 reduced [2Fe-2S]-[ferredoxin] + 2 S-adenosyl-L-methionine = 2-methyladenosine(37) in tRNA + 5'-deoxyadenosine + L-methionine + 2 oxidized [2Fe-2S]-[ferredoxin] + S-adenosyl-L-homocysteine. In terms of biological role, specifically methylates position 2 of adenine 2503 in 23S rRNA and position 2 of adenine 37 in tRNAs. m2A2503 modification seems to play a crucial role in the proofreading step occurring at the peptidyl transferase center and thus would serve to optimize ribosomal fidelity. This is Dual-specificity RNA methyltransferase RlmN from Salmonella arizonae (strain ATCC BAA-731 / CDC346-86 / RSK2980).